A 341-amino-acid chain; its full sequence is MVTDLGGGYAEAEGGPVRHIPVLLEPVIEALEPSAGKVILDGTFGAGGYTSAILDTGADVIALDRDPNAIAGGQAMVAARAGRLTLHHTRFSTLDNFAPEGGLDGIVLDIGVSSMQIDEAERGFSFQRNGPLDMRMSGTGVSAADVVNRAKVGDLIRIFGFLGEEKQSGRIARAIEKRRVNHPFQTTRDLAGMIEIVTPRKAKDKIHPATRVFQALRVFVNDELGELAEALFAAERALKPGGRLVVVTFHSLEDRIVKKFFSDRSGKAAGSRHMPMAFERPATFEPVGKGMVTATEEEAEINPRARSAKLRAGIRTAHPAMKADFSIFDLPDLAEIERLGA.

S-adenosyl-L-methionine is bound by residues 47 to 49 (GGY), aspartate 64, phenylalanine 97, aspartate 109, and glutamine 116.

The protein belongs to the methyltransferase superfamily. RsmH family.

It is found in the cytoplasm. It carries out the reaction cytidine(1402) in 16S rRNA + S-adenosyl-L-methionine = N(4)-methylcytidine(1402) in 16S rRNA + S-adenosyl-L-homocysteine + H(+). Specifically methylates the N4 position of cytidine in position 1402 (C1402) of 16S rRNA. This is Ribosomal RNA small subunit methyltransferase H from Allorhizobium ampelinum (strain ATCC BAA-846 / DSM 112012 / S4) (Agrobacterium vitis (strain S4)).